The sequence spans 225 residues: Transcriptional activator protein BglJ (225 aa).

The HTH luxR-type domain maps to 146–211 (YINQSRTLSP…GLLEAADILL (66 aa)). Positions 170–189 (MTQIAEQLKRNIKTIRAHKF) form a DNA-binding region, H-T-H motif.

In terms of assembly, forms a complex with RcsB; genetically both BglJ and RcsB are required to relieve bgl operon repression by H-NS and by StpA.

A crytic transcriptional activator. When its expression is induced it relieves H-NS repression of the bgl operon. Acts independently of transcription factor LeuO. The sequence is that of Transcriptional activator protein BglJ (bglJ) from Escherichia coli (strain K12).